The following is a 618-amino-acid chain: Chaperone protein HscA homolog (618 aa).

This sequence belongs to the heat shock protein 70 family.

In terms of biological role, chaperone involved in the maturation of iron-sulfur cluster-containing proteins. Has a low intrinsic ATPase activity which is markedly stimulated by HscB. The sequence is that of Chaperone protein HscA homolog from Variovorax paradoxus (strain S110).